The primary structure comprises 445 residues: 6-phosphogluconate dehydrogenase, decarboxylating (445 aa).

NADP(+) contacts are provided by residues 1–4 (AVMG), 22–24 (NRS), 63–65 (VKA), and Asn91. Substrate-binding positions include Asn91 and 117–119 (SGG). The Proton acceptor role is filled by Lys172. Residue 175-176 (HN) coordinates substrate. Glu179 acts as the Proton donor in catalysis. Substrate-binding residues include Tyr180, Lys249, Arg276, Arg434, and His440.

It belongs to the 6-phosphogluconate dehydrogenase family. Homodimer.

It carries out the reaction 6-phospho-D-gluconate + NADP(+) = D-ribulose 5-phosphate + CO2 + NADPH. The protein operates within carbohydrate degradation; pentose phosphate pathway; D-ribulose 5-phosphate from D-glucose 6-phosphate (oxidative stage): step 3/3. Catalyzes the oxidative decarboxylation of 6-phosphogluconate to ribulose 5-phosphate and CO(2), with concomitant reduction of NADP to NADPH. The protein is 6-phosphogluconate dehydrogenase, decarboxylating (gnd) of Shigella boydii.